A 454-amino-acid chain; its full sequence is tRNA modification GTPase MnmE (454 aa).

Residues Arg23, Glu80, and Lys120 each contribute to the (6S)-5-formyl-5,6,7,8-tetrahydrofolate site. One can recognise a TrmE-type G domain in the interval Gly216–Gly377. Asn226 is a binding site for K(+). GTP is bound by residues Asn226–Ser231, Thr245–Thr251, Asp270–Gly273, Asn335–Asp338, and Ser358–Arg360. Ser230 provides a ligand contact to Mg(2+). Residues Thr245, Ile247, and Thr250 each contribute to the K(+) site. Mg(2+) is bound at residue Thr251. Lys454 is a binding site for (6S)-5-formyl-5,6,7,8-tetrahydrofolate.

This sequence belongs to the TRAFAC class TrmE-Era-EngA-EngB-Septin-like GTPase superfamily. TrmE GTPase family. Homodimer. Heterotetramer of two MnmE and two MnmG subunits. Requires K(+) as cofactor.

The protein resides in the cytoplasm. Functionally, exhibits a very high intrinsic GTPase hydrolysis rate. Involved in the addition of a carboxymethylaminomethyl (cmnm) group at the wobble position (U34) of certain tRNAs, forming tRNA-cmnm(5)s(2)U34. The chain is tRNA modification GTPase MnmE from Escherichia coli O7:K1 (strain IAI39 / ExPEC).